Consider the following 319-residue polypeptide: MKIFIHLPTWLGDTVMASPALYTIKEHFKDAQFILYGSFVSTALFKEFPNSKIIIENKLSRYKQALSLRKELGKIDLSFAFRSAFSSKIILHILKTKQRYFFDKNKYKEEHQVLKYLYFIENSLSIKAHFKDLKLPFKLKFQNPLILRNGKKILGLNPGASFGSAKRWDASYFAKVALNFSQSHDILIFGAGKAEQELCNEIYQILKEQNIKVKNLCNKTTIKTLCQNIAFCDLFITNDSGPMHLSAVYKVKTVAIFGPTKFTQTSPWQNENAKLVHLDLACMPCMQKTCPLKHHKCMKDLKPEKVIEQAKNLLKNSHL.

This sequence belongs to the glycosyltransferase 9 family.

It carries out the reaction an L-alpha-D-Hep-(1-&gt;5)-[alpha-Kdo-(2-&gt;4)]-alpha-Kdo-(2-&gt;6)-lipid A + ADP-L-glycero-beta-D-manno-heptose = an L-alpha-D-Hep-(1-&gt;3)-L-alpha-D-Hep-(1-&gt;5)-[alpha-Kdo-(2-&gt;4)]-alpha-Kdo-(2-&gt;6)-lipid A + ADP + H(+). It participates in bacterial outer membrane biogenesis; LOS core biosynthesis. Glycosyltransferase involved in the biosynthesis of the core oligosaccharide region of lipooligosaccharide (LOS). Catalyzes the addition of the second heptose unit to the heptosyl-Kdo2-lipid A module. The sequence is that of Lipooligosaccharide heptosyltransferase 2 from Campylobacter jejuni subsp. jejuni serotype O:2 (strain ATCC 700819 / NCTC 11168).